We begin with the raw amino-acid sequence, 546 residues long: CTP synthase (546 aa).

The tract at residues 1-266 (MAKYYIFITG…DSYVCDRFCI (266 aa)) is amidoligase domain. CTP is bound at residue serine 14. Serine 14 lines the UTP pocket. ATP-binding positions include 15–20 (SLGKGI) and aspartate 72. Aspartate 72 and glutamate 140 together coordinate Mg(2+). Residues 147–149 (DIE), 187–192 (KTKPTQ), and lysine 223 each bind CTP. UTP-binding positions include 187 to 192 (KTKPTQ) and lysine 223. The 254-residue stretch at 291–544 (NIGIIGKYTE…VKAAFDFKNK (254 aa)) folds into the Glutamine amidotransferase type-1 domain. Residue glycine 352 coordinates L-glutamine. Cysteine 379 serves as the catalytic Nucleophile; for glutamine hydrolysis. Residues 380–383 (LGMQ), glutamate 403, and arginine 470 each bind L-glutamine. Active-site residues include histidine 517 and glutamate 519.

This sequence belongs to the CTP synthase family. In terms of assembly, homotetramer.

The catalysed reaction is UTP + L-glutamine + ATP + H2O = CTP + L-glutamate + ADP + phosphate + 2 H(+). The enzyme catalyses L-glutamine + H2O = L-glutamate + NH4(+). It carries out the reaction UTP + NH4(+) + ATP = CTP + ADP + phosphate + 2 H(+). It participates in pyrimidine metabolism; CTP biosynthesis via de novo pathway; CTP from UDP: step 2/2. Allosterically activated by GTP, when glutamine is the substrate; GTP has no effect on the reaction when ammonia is the substrate. The allosteric effector GTP functions by stabilizing the protein conformation that binds the tetrahedral intermediate(s) formed during glutamine hydrolysis. Inhibited by the product CTP, via allosteric rather than competitive inhibition. Functionally, catalyzes the ATP-dependent amination of UTP to CTP with either L-glutamine or ammonia as the source of nitrogen. Regulates intracellular CTP levels through interactions with the four ribonucleotide triphosphates. In Wigglesworthia glossinidia brevipalpis, this protein is CTP synthase.